The following is a 3289-amino-acid chain: tRNA nuclease CdiA (3289 aa).

The signal sequence occupies residues 1–32 (MHQPPVRFTYRLLSYLISTIIAGQPLLPAVGA). Residues 36-322 (PQNGAGMDKA…AGGNLSVSSR (287 aa)) form a two-partner system transport domain (TPS) region. Positions 351-1398 (EKLTAGRDVT…IVVRTGHLLN (1048 aa)) are FHA-1. The tract at residues 595–615 (AVNASEKLTHSGKSSAPSLSL) is disordered. The tract at residues 1399–1689 (QREGFSATTT…LTGQTGISDD (291 aa)) is receptor binding domain (RBD). Residues 1690-1874 (WPLPSGNNGY…LSPEDITLHN (185 aa)) are YP domain. Residues 1875–1935 (GSVISGNNVQ…DLSAIGDISN (61 aa)) are periplasmic FHA-1 repeat (pFR). Residues 1979-2653 (TDTGPVATIK…TSKYDSKQTS (675 aa)) form an FHA-2 region. Basic and acidic residues predominate over residues 2097-2113 (RESKNSRNGRSESHESH). 3 disordered regions span residues 2097 to 2116 (RESK…HAAV), 2332 to 2356 (GSSK…TIGS), and 2466 to 2513 (TGDP…TGKN). Composition is skewed to polar residues over residues 2344 to 2356 (GTTQ…TIGS) and 2472 to 2507 (TGVS…NLSV). The tract at residues 2992–3034 (SDLSEEQKQTISTLATVSAGLAGGLTGNSTASAAVGAQSGKNA) is pretoxin (PT) domain. The VENN CT cleavage motif motif lies at 3035 to 3038 (VENN). The interval 3035–3289 (VENNYLSVSE…VGHIQPVKVK (255 aa)) is C-terminal effector domain (CT); has tRNase activity. Residues 3039–3197 (YLSVSEKTEL…PLIGQAASNK (159 aa)) form an inner membrane translocation domain (IMTD), targets protein to PtsG region.

In the N-terminal section; belongs to the CdiA toxin family. Forms a contact-dependent growth inhibition complex of CdiA-CT-NC101, CdiI-NC101 and EF-Tu; the complex is a dimer of heterotrimers. Stable CdiA-CT-NC101, EF-Tu complexes are not detected, nor are complexes with EF-Ts.

It is found in the secreted. The protein resides in the target cell. Its subcellular location is the target cell cytoplasm. In terms of biological role, toxic component of a toxin-immunity protein module, which functions as a cellular contact-dependent growth inhibition (CDI) system. CDI modules allow bacteria to communicate with and inhibit the growth of closely related neighboring bacteria in a contact-dependent fashion (target cell counts decrease about 10,0000-fold for this system). CdiA toxicity is neutralized by its cognate immunity protein CdiI-NC101, but not by CdiI from other bacteria. The C-terminal domain (CT) cleaves tRNA endonucleolytically at the 5' side of guanine discriminator nucleotide sites (removes the last 4 nucleotides of the tRNA acceptor arm when the first nucleotide to be removed is G). Requires EF-Ts (tsf) for toxic function of the CT domain in vivo. In vitro the CT tRNase activity requires both EF-Tu (tufA) and EF-Ts. EF-Ts probably increases steady-state GTP-EF-Tu-aa-tRNA substrate levels. The CT domain is thought to remodel this same complex to displace the 3'-end of the aa-tRNA and allow it to enter into the toxin active site. The CT domain gains access to the cytoplasm of target cells by using integral inner membrane protein PTS system glucose-specific EIICB component (ptsG). Its function is as follows. The CdiA protein is thought to be exported from the cell through the central lumen of CdiB, the other half of its two-partner system (TPS). The TPS domain probably remains associated with CdiB while the FHA-1 domain forms an extended filament with the receptor-binding domain (RBD) at its extremity; in the secretion arrested state the C-terminus of the RBD and YP domains form a hairpin-like structure as the FHA-2, PT and CT domains are periplasmic. The YP domain is probably responsible for this arrest at the point where it re-enters the host cell periplasm. Upon binding to a target cell outer membrane receptor a signal is transmitted to activate secretion. The filament elongates slightly, the rest of CdiA is secreted and the FHA-2 domain becomes stably associated with the target cell's outer membrane where it facilitates entry of the toxic CT domain into the target cell periplasm. From there the toxic CT domain is cleaved and gains access to the target cell cytoplasm via an inner membrane protein (PtsG for this CDI). This Escherichia coli (strain NC101) protein is tRNA nuclease CdiA.